The sequence spans 362 residues: Serine/threonine-protein kinase SBK2 (362 aa).

Residues 1 to 11 (MPGKQSEDRPM) are compositionally biased toward basic and acidic residues. The disordered stretch occupies residues 1 to 20 (MPGKQSEDRPMEVAAVEDGG). In terms of domain architecture, Protein kinase spans 62–330 (YEEVRPLGQG…IKSYLGQPWK (269 aa)). Residues 68 to 76 (LGQGRFGRV) and K91 contribute to the ATP site. Residue D183 is the Proton acceptor of the active site. The segment at 317 to 362 (PVSSIKSYLGQPWKQREEGAEELTKELREDGSRGGQEAAKGEQPAC) is disordered. The segment covering 330 to 348 (KQREEGAEELTKELREDGS) has biased composition (basic and acidic residues).

This sequence belongs to the protein kinase superfamily. Ser/Thr protein kinase family. STKL subfamily.

The enzyme catalyses L-seryl-[protein] + ATP = O-phospho-L-seryl-[protein] + ADP + H(+). It carries out the reaction L-threonyl-[protein] + ATP = O-phospho-L-threonyl-[protein] + ADP + H(+). The polypeptide is Serine/threonine-protein kinase SBK2 (Sbk2) (Rattus norvegicus (Rat)).